The chain runs to 403 residues: D-alanyl-D-alanine carboxypeptidase DacA (403 aa).

A signal peptide spans 1-29 (MNTIFSARIMKRLALTTALCTAFISAAHA). The active-site Acyl-ester intermediate is serine 73. The active-site Proton acceptor is the lysine 76. Serine 139 is a catalytic residue. Lysine 242 contributes to the substrate binding site.

This sequence belongs to the peptidase S11 family.

It localises to the cell inner membrane. The enzyme catalyses Preferential cleavage: (Ac)2-L-Lys-D-Ala-|-D-Ala. Also transpeptidation of peptidyl-alanyl moieties that are N-acyl substituents of D-alanine.. The protein operates within cell wall biogenesis; peptidoglycan biosynthesis. Functionally, removes C-terminal D-alanyl residues from sugar-peptide cell wall precursors. In Escherichia coli O157:H7, this protein is D-alanyl-D-alanine carboxypeptidase DacA (dacA).